Reading from the N-terminus, the 60-residue chain is Putative per-hexamer repeat protein 1 (60 aa).

This Mus musculus (Mouse) protein is Putative per-hexamer repeat protein 1 (Phxr1).